Consider the following 725-residue polypeptide: Polyribonucleotide nucleotidyltransferase (725 aa).

Mg(2+) is bound by residues D487 and D493. The region spanning 554–613 (PRIETMQIPTDKIREVIGTGGKVIREIVEKTGAKIDIQDTGVVKIASSDGKAIKAAYNWI) is the KH domain. In terms of domain architecture, S1 motif spans 623–691 (GMIYDGTVVK…ERGKIRLSMK (69 aa)). The disordered stretch occupies residues 699–725 (EDLTEKLKAEREADRNRERQARQSAGE). The span at 701–719 (LTEKLKAEREADRNRERQA) shows a compositional bias: basic and acidic residues.

Belongs to the polyribonucleotide nucleotidyltransferase family. The cofactor is Mg(2+).

The protein resides in the cytoplasm. It carries out the reaction RNA(n+1) + phosphate = RNA(n) + a ribonucleoside 5'-diphosphate. Its function is as follows. Involved in mRNA degradation. Catalyzes the phosphorolysis of single-stranded polyribonucleotides processively in the 3'- to 5'-direction. The sequence is that of Polyribonucleotide nucleotidyltransferase from Methylobacterium sp. (strain 4-46).